A 186-amino-acid chain; its full sequence is Threonylcarbamoyl-AMP synthase (186 aa).

Residues 5-186 (TQSINDAVKC…DAITGEILRL (182 aa)) form the YrdC-like domain.

The protein belongs to the SUA5 family. TsaC subfamily.

Its subcellular location is the cytoplasm. The catalysed reaction is L-threonine + hydrogencarbonate + ATP = L-threonylcarbamoyladenylate + diphosphate + H2O. Required for the formation of a threonylcarbamoyl group on adenosine at position 37 (t(6)A37) in tRNAs that read codons beginning with adenine. Catalyzes the conversion of L-threonine, HCO(3)(-)/CO(2) and ATP to give threonylcarbamoyl-AMP (TC-AMP) as the acyladenylate intermediate, with the release of diphosphate. In Coxiella burnetii (strain RSA 493 / Nine Mile phase I), this protein is Threonylcarbamoyl-AMP synthase.